The sequence spans 981 residues: uncharacterized protein (981 aa).

5 disordered regions span residues 65–133 (NIDN…SNNS), 149–463 (SSNS…NKIE), 491–580 (SNNI…DSPL), 592–834 (EQTN…LNQV), and 861–891 (VQND…NDGN). Acidic residues predominate over residues 75 to 88 (SSDDDDDDDDDDDY). Low complexity-rich tracts occupy residues 89–133 (NNNN…SNNS), 149–158 (SSNSINNNDN), and 170–181 (SAKTTSSLTSSK). Over residues 182-195 (RSLDSRNRNRDRSY) the composition is skewed to basic and acidic residues. The span at 196–206 (TRSRSRSRSRS) shows a compositional bias: basic residues. A compositionally biased stretch (low complexity) spans 207 to 227 (YSRGFSSLSRSRSRSRSISSR). The segment covering 228–269 (SRSRSRSRRSRSRSSRSRSRSRSKSKSKSRRSRSRSRSRRSR) has biased composition (basic residues). Over residues 270–292 (SRSDSRSRSDSRGRSRSRSDSRK) the composition is skewed to basic and acidic residues. Residues 314 to 358 (SSKRHQNSRKRNRSYSRSRTRSWSRSRTRSRSRRRYGGRTFRSPR) are compositionally biased toward basic residues. Residues 359–452 (RSRDDSRDRG…SQSPHNEKNK (94 aa)) show a composition bias toward basic and acidic residues. A compositionally biased stretch (low complexity) spans 491–553 (SNNINNNNIK…SHNNTNGNVN (63 aa)). 2 stretches are compositionally biased toward polar residues: residues 554–576 (GVSK…STDL) and 605–622 (ESNN…SSTE). Residues 623-634 (NENKNRENEKNN) show a composition bias toward basic and acidic residues. Composition is skewed to low complexity over residues 635–820 (SENS…NNNS) and 867–891 (SSPI…NDGN).

This is an uncharacterized protein from Dictyostelium discoideum (Social amoeba).